The sequence spans 318 residues: DNA-directed RNA polymerase subunit alpha (318 aa).

An alpha N-terminal domain (alpha-NTD) region spans residues 1–227 (MTQFEIECLD…NLFSPLKTID (227 aa)). Positions 241-318 (HINQILIEEL…KEKTTKIYNK (78 aa)) are alpha C-terminal domain (alpha-CTD).

It belongs to the RNA polymerase alpha chain family. In plastids the minimal PEP RNA polymerase catalytic core is composed of four subunits: alpha, beta, beta', and beta''. When a (nuclear-encoded) sigma factor is associated with the core the holoenzyme is formed, which can initiate transcription.

It is found in the plastid. The protein resides in the chloroplast. It catalyses the reaction RNA(n) + a ribonucleoside 5'-triphosphate = RNA(n+1) + diphosphate. Its function is as follows. DNA-dependent RNA polymerase catalyzes the transcription of DNA into RNA using the four ribonucleoside triphosphates as substrates. The sequence is that of DNA-directed RNA polymerase subunit alpha from Guillardia theta (Cryptophyte).